We begin with the raw amino-acid sequence, 310 residues long: N-acetyl-gamma-glutamyl-phosphate reductase (310 aa).

Cysteine 117 is an active-site residue.

Belongs to the NAGSA dehydrogenase family. Type 2 subfamily.

The protein resides in the cytoplasm. It carries out the reaction N-acetyl-L-glutamate 5-semialdehyde + phosphate + NADP(+) = N-acetyl-L-glutamyl 5-phosphate + NADPH + H(+). It functions in the pathway amino-acid biosynthesis; L-arginine biosynthesis; N(2)-acetyl-L-ornithine from L-glutamate: step 3/4. Catalyzes the NADPH-dependent reduction of N-acetyl-5-glutamyl phosphate to yield N-acetyl-L-glutamate 5-semialdehyde. This is N-acetyl-gamma-glutamyl-phosphate reductase from Allorhizobium ampelinum (strain ATCC BAA-846 / DSM 112012 / S4) (Agrobacterium vitis (strain S4)).